We begin with the raw amino-acid sequence, 143 residues long: MAVERTLSIIKPDAVGKNHIGEIIARFEKAGLKPVAMKYKHLSQAEAEGFYAEHKERGFFADLVAFMTSGPVVVSALEGENAVLAHREILGATNPKEAAPGTIRADFATSIDENAAHGSDSVASAEREIAYFFAADEIFPRTR.

ATP-binding residues include lysine 11, phenylalanine 59, arginine 87, threonine 93, arginine 104, and asparagine 114. Histidine 117 serves as the catalytic Pros-phosphohistidine intermediate.

This sequence belongs to the NDK family. Homotetramer. Requires Mg(2+) as cofactor.

It localises to the cytoplasm. It carries out the reaction a 2'-deoxyribonucleoside 5'-diphosphate + ATP = a 2'-deoxyribonucleoside 5'-triphosphate + ADP. The enzyme catalyses a ribonucleoside 5'-diphosphate + ATP = a ribonucleoside 5'-triphosphate + ADP. Functionally, major role in the synthesis of nucleoside triphosphates other than ATP. The ATP gamma phosphate is transferred to the NDP beta phosphate via a ping-pong mechanism, using a phosphorylated active-site intermediate. The protein is Nucleoside diphosphate kinase of Acinetobacter baylyi (strain ATCC 33305 / BD413 / ADP1).